A 317-amino-acid polypeptide reads, in one-letter code: MSAGKTVVIALGGNAMLQAKEKGDYDTQRKNVEIAASEIYKIHKAGYKVVLTSGNAPQVGAIKLQNQAAAGVSPEMPLHVCGAMSQGFIGYMMSQAMDNVFCANNEPANCVTCVTQTLVDPKDQAFTNPTKPRWRFYTEQEAKDLMAANPGKILREDAWPAGWRVVVPSPRPLEIVEYGVIKTLIDNNVLVICTNGGGIPCKRENKVISGVDAVIDKDLATSLLAKTLNSDYLMILTDVLNACINYKKPDERKLEEIKLSEILALEKDGHFAAGSMGPKVRAAIEFTQATGKMSIITSLSTAVDALNGKCGTRIIKD.

The protein belongs to the carbamate kinase family. Homodimer.

The enzyme catalyses hydrogencarbonate + NH4(+) + ATP = carbamoyl phosphate + ADP + H2O + H(+). It functions in the pathway metabolic intermediate metabolism; carbamoyl phosphate degradation; CO(2) and NH(3) from carbamoyl phosphate: step 1/1. The sequence is that of Carbamate kinase (CBK) from Giardia intestinalis (Giardia lamblia).